The primary structure comprises 721 residues: Ribonucleoside-diphosphate reductase subunit alpha (721 aa).

Residues T159, 175–176 (SC), G204, 384–388 (NLCSE), and 589–593 (PTGSI) contribute to the substrate site. A disulfide bond links C176 and C413. N384 serves as the catalytic Proton acceptor. The Cysteine radical intermediate role is filled by C386. Residue E388 is the Proton acceptor of the active site.

The protein belongs to the ribonucleoside diphosphate reductase large chain family. In terms of assembly, tetramer of two alpha and two beta subunits.

The catalysed reaction is a 2'-deoxyribonucleoside 5'-diphosphate + [thioredoxin]-disulfide + H2O = a ribonucleoside 5'-diphosphate + [thioredoxin]-dithiol. Its activity is regulated as follows. Under complex allosteric control mediated by deoxynucleoside triphosphates and ATP binding. The type of nucleotide bound at the specificity site determines substrate preference. It seems probable that ATP makes the enzyme reduce CDP and UDP, dGTP favors ADP reduction and dTTP favors GDP reduction. In terms of biological role, provides the precursors necessary for DNA synthesis. Catalyzes the biosynthesis of deoxyribonucleotides from the corresponding ribonucleotides. This Mycoplasma genitalium (strain ATCC 33530 / DSM 19775 / NCTC 10195 / G37) (Mycoplasmoides genitalium) protein is Ribonucleoside-diphosphate reductase subunit alpha (nrdE).